We begin with the raw amino-acid sequence, 103 residues long: Large ribosomal subunit protein bL21 (103 aa).

The protein belongs to the bacterial ribosomal protein bL21 family. As to quaternary structure, part of the 50S ribosomal subunit. Contacts protein L20.

This protein binds to 23S rRNA in the presence of protein L20. The sequence is that of Large ribosomal subunit protein bL21 from Nitrosomonas europaea (strain ATCC 19718 / CIP 103999 / KCTC 2705 / NBRC 14298).